The chain runs to 107 residues: uncharacterized protein (107 aa).

This is an uncharacterized protein from Yersinia pseudotuberculosis serotype I (strain IP32953).